A 147-amino-acid chain; its full sequence is Transthyretin (147 aa).

The signal sequence occupies residues 1–20 (MASFRLLLLCLAGLVFVSEA). Cys30 bears the Sulfocysteine mark. Lys35 contacts L-thyroxine. 4-carboxyglutamate is present on Glu62. Residue Ser72 is modified to Phosphoserine. Residue Glu74 participates in L-thyroxine binding. Asn118 carries N-linked (GlcNAc...) asparagine glycosylation. Residue Ser137 coordinates L-thyroxine.

It belongs to the transthyretin family. In terms of assembly, homotetramer. Dimer of dimers. In the homotetramer, subunits assemble around a central channel that can accommodate two ligand molecules. Interacts with RBP4. Post-translationally, sulfonation of the reactive cysteine Cys-30 enhances the stability of the native conformation of TTR, avoiding misassembly of the protein leading to amyloid formation. As to expression, highly expressed in the choroid plexus.

It localises to the secreted. Functionally, thyroid hormone-binding protein. Probably transports thyroxine from the bloodstream to the brain. This Ovis aries (Sheep) protein is Transthyretin (TTR).